Consider the following 73-residue polypeptide: UPF0435 protein lmo1707 (73 aa).

This sequence belongs to the UPF0435 family.

The sequence is that of UPF0435 protein lmo1707 from Listeria monocytogenes serovar 1/2a (strain ATCC BAA-679 / EGD-e).